A 249-amino-acid polypeptide reads, in one-letter code: MTIKKLILVRHGESEWNKENRFTGWADVDLSEKGRVEAQQAGNLLKKKGFSFDFAYTSVLRRATNTLSLILDVLQQQNLPIEKSWRLNERHYGALQGLNKSETAAKFGSEQVKQWRRGFSTLPPALNLNDPRAPANDSLYATLNKNDLPLTESLATTVDRVVPYWDEVVKPRIIDGKRVIIVAHGNSIRALVKYVDHLSEEEIMEINIPTAVPLVYEFNSSLQPINHYYLGNAEEITQKVAAVAAQGKA.

Residues 10-17 (RHGESEWN), 23-24 (TG), arginine 62, 89-92 (ERHY), lysine 100, 116-117 (RR), and 185-186 (GN) each bind substrate. Residue histidine 11 is the Tele-phosphohistidine intermediate of the active site. The active-site Proton donor/acceptor is the glutamate 89.

Belongs to the phosphoglycerate mutase family. BPG-dependent PGAM subfamily. In terms of assembly, homodimer.

It catalyses the reaction (2R)-2-phosphoglycerate = (2R)-3-phosphoglycerate. It participates in carbohydrate degradation; glycolysis; pyruvate from D-glyceraldehyde 3-phosphate: step 3/5. In terms of biological role, catalyzes the interconversion of 2-phosphoglycerate and 3-phosphoglycerate. This Hamiltonella defensa subsp. Acyrthosiphon pisum (strain 5AT) protein is 2,3-bisphosphoglycerate-dependent phosphoglycerate mutase.